Reading from the N-terminus, the 383-residue chain is Small ribosomal subunit protein mS31 (383 aa).

The N-terminal 21 residues, 1-21 (MLRSLCSIAVRLGGARQPRLL), are a transit peptide targeting the mitochondrion. Residues 158-187 (VNEAQIKLQEQRKALLNDVREKVEQEEVEE) are a coiled coil.

The protein belongs to the mitochondrion-specific ribosomal protein mS31 family. Component of the mitochondrial ribosome small subunit (28S) which comprises a 12S rRNA and about 30 distinct proteins.

The protein localises to the mitochondrion. The chain is Small ribosomal subunit protein mS31 (mrps-31) from Caenorhabditis elegans.